Consider the following 285-residue polypeptide: Flagellar filament 30.7 kDa core protein (285 aa).

The protein belongs to the bacterial flagellin family. The core of the flagellum consists of several antigenically related polypeptides. In terms of processing, glycosylated. Glycosylation is not essential for motility.

Its subcellular location is the periplasmic flagellum. It is found in the periplasm. Functionally, component of the core of the flagella. This is Flagellar filament 30.7 kDa core protein (flaB3) from Treponema maltophilum.